Reading from the N-terminus, the 21-residue chain is Helicopsin (21 aa).

It belongs to the CRISP family. Contains 8 disulfide bonds. As to expression, expressed by the salivary gland.

It is found in the secreted. Its function is as follows. Helicopsin exhibits robust neurotoxic activity as shown by immediate death (about 8 minutes) of mice due to respiratory paralysis. In Helicops angulatus (South American water snake), this protein is Helicopsin.